The following is a 226-amino-acid chain: Deoxyribose-phosphate aldolase (226 aa).

Aspartate 94 acts as the Proton donor/acceptor in catalysis. The Schiff-base intermediate with acetaldehyde role is filled by lysine 156. The active-site Proton donor/acceptor is lysine 185.

It belongs to the DeoC/FbaB aldolase family. DeoC type 1 subfamily.

Its subcellular location is the cytoplasm. The catalysed reaction is 2-deoxy-D-ribose 5-phosphate = D-glyceraldehyde 3-phosphate + acetaldehyde. Its pathway is carbohydrate degradation; 2-deoxy-D-ribose 1-phosphate degradation; D-glyceraldehyde 3-phosphate and acetaldehyde from 2-deoxy-alpha-D-ribose 1-phosphate: step 2/2. Its function is as follows. Catalyzes a reversible aldol reaction between acetaldehyde and D-glyceraldehyde 3-phosphate to generate 2-deoxy-D-ribose 5-phosphate. The polypeptide is Deoxyribose-phosphate aldolase (Burkholderia lata (strain ATCC 17760 / DSM 23089 / LMG 22485 / NCIMB 9086 / R18194 / 383)).